The sequence spans 189 residues: Putative manganese efflux pump MntP (189 aa).

The next 6 helical transmembrane spans lie at 3 to 23 (PISL…AALG), 41 to 61 (LIFG…GQVA), 69 to 89 (DHWI…YNGI), 105 to 125 (FWIL…VGVG), 133 to 153 (IVIA…IGVM), and 168 to 188 (IVGG…HLSA).

Belongs to the MntP (TC 9.B.29) family.

It is found in the cell inner membrane. Probably functions as a manganese efflux pump. The sequence is that of Putative manganese efflux pump MntP from Pseudomonas savastanoi pv. phaseolicola (strain 1448A / Race 6) (Pseudomonas syringae pv. phaseolicola (strain 1448A / Race 6)).